A 68-amino-acid chain; its full sequence is Large ribosomal subunit protein uL30 (68 aa).

This sequence belongs to the universal ribosomal protein uL30 family. Part of the 50S ribosomal subunit.

This is Large ribosomal subunit protein uL30 from Agrobacterium fabrum (strain C58 / ATCC 33970) (Agrobacterium tumefaciens (strain C58)).